A 273-amino-acid polypeptide reads, in one-letter code: Dermonecrotic toxin LsaSicTox-alphaIB1aii (273 aa).

Residue His-5 is part of the active site. Mg(2+) contacts are provided by Glu-25 and Asp-27. Catalysis depends on His-41, which acts as the Nucleophile. 2 disulfide bridges follow: Cys-45–Cys-51 and Cys-47–Cys-190. Mg(2+) is bound at residue Asp-85.

Belongs to the arthropod phospholipase D family. Class II subfamily. It depends on Mg(2+) as a cofactor. As to expression, expressed by the venom gland.

The protein localises to the secreted. The enzyme catalyses an N-(acyl)-sphingosylphosphocholine = an N-(acyl)-sphingosyl-1,3-cyclic phosphate + choline. The catalysed reaction is an N-(acyl)-sphingosylphosphoethanolamine = an N-(acyl)-sphingosyl-1,3-cyclic phosphate + ethanolamine. It carries out the reaction a 1-acyl-sn-glycero-3-phosphocholine = a 1-acyl-sn-glycero-2,3-cyclic phosphate + choline. It catalyses the reaction a 1-acyl-sn-glycero-3-phosphoethanolamine = a 1-acyl-sn-glycero-2,3-cyclic phosphate + ethanolamine. Dermonecrotic toxins cleave the phosphodiester linkage between the phosphate and headgroup of certain phospholipids (sphingolipid and lysolipid substrates), forming an alcohol (often choline) and a cyclic phosphate. This toxin acts on sphingomyelin (SM). It may also act on ceramide phosphoethanolamine (CPE), lysophosphatidylcholine (LPC) and lysophosphatidylethanolamine (LPE), but not on lysophosphatidylserine (LPS), and lysophosphatidylglycerol (LPG). It acts by transphosphatidylation, releasing exclusively cyclic phosphate products as second products. Induces dermonecrosis, hemolysis, increased vascular permeability, edema, inflammatory response, and platelet aggregation. The chain is Dermonecrotic toxin LsaSicTox-alphaIB1aii from Loxosceles sabina (Tucson recluse spider).